The following is a 524-amino-acid chain: Sterol O-acyltransferase 2 (524 aa).

A disordered region spans residues 1–31; it reads MEPKAPQLRRRERQGEEQENGACGEGNTRTH. Over 1 to 118 the chain is Cytoplasmic; it reads MEPKAPQLRR…LDELMGVQHF (118 aa). Histidine 117 is a cholesterol binding site. The chain crosses the membrane as a helical span at residues 119-140; that stretch reads RTIYHMFIAGLCVLIISTLAID. Residues 141–160 lie on the Lumenal side of the membrane; the sequence is FIDEGRLMLEFDLLLFSFGQ. Residues 161–186 traverse the membrane as a helical segment; sequence LPLALMMWVPMFLSTLLLPYQTLRLW. The Cytoplasmic portion of the chain corresponds to 187–198; sequence ARPRSGGAWTLG. A helical membrane pass occupies residues 199-222; that stretch reads ASLGCVLLAAHAAVLCVLPVHVSV. The Lumenal segment spans residues 223–230; sequence KHELPPAS. The chain crosses the membrane as a helical span at residues 231 to 254; that stretch reads RCVLVFEQVRFLMKSYSFLRETVP. The Cytoplasmic portion of the chain corresponds to 255 to 295; sequence GIFCVRGGKGICTPSFSSYLYFLFCPTLIYRETYPRTPSIR. Cysteine 279 carries the cysteine sulfenic acid (-SOH); alternate modification. A Glycyl cysteine thioester (Cys-Gly) (interchain with G-Cter in ubiquitin); alternate cross-link involves residue cysteine 279. Residues 296-328 form a helical membrane-spanning segment; sequence WNYVAKNFAQALGCLLYACFILGRLCVPVFANM. The Lumenal segment spans residues 329–345; it reads SREPFSTRALLLSILHA. Residues 346-371 traverse the membrane as a helical segment; that stretch reads TGPGIFMLLLIFFAFLHCWLNAFAEM. Over 372–419 the chain is Cytoplasmic; that stretch reads LRFGDRMFYRDWWNSTSFSNYYRTWNVVVHDWLYSYVYQDGLWLLGRQ. The FYXDWWN motif signature appears at 379-385; that stretch reads FYRDWWN. An acyl-CoA-binding residues include asparagine 391, arginine 394, asparagine 397, histidine 401, tyrosine 409, and serine 432. Residues 420–444 traverse the membrane as a helical segment; sequence GRGAAMLGVFLVSALVHEYIFCFVL. Residue histidine 436 is part of the active site. Topologically, residues 445-450 are lumenal; that stretch reads GFFYPV. Residues 451-466 form a helical membrane-spanning segment; it reads MLILFLVVGGLLNFTM. The Cytoplasmic portion of the chain corresponds to 467–472; that stretch reads NDRHTG. Residues 473–504 traverse the membrane as a helical segment; it reads PAWNILMWTFLFLGQGIQVSLYCQEWYARRHC. At 505 to 524 the chain is on the lumenal side; sequence PLPQPTFWELVTPRSWSCHP.

This sequence belongs to the membrane-bound acyltransferase family. Sterol o-acyltransferase subfamily. May form homo- or heterodimers. Interacts with INSIG1; the interaction is direct and promotes association with AMFR/gp78. Post-translationally, polyubiquitinated by AMFR/gp78 at Cys-279, leading to its degradation when the lipid levels are low. Association with AMFR/gp78 is mediated via interaction with INSIG1. High concentration of cholesterol and fatty acid results in Cys-279 oxidation, preventing ubiquitination at the same site, resulting in protein stabilization. Oxidized at Cys-279: high concentration of cholesterol and fatty acid induce reactive oxygen species, which oxidizes Cys-279, preventing ubiquitination at the same site, and resulting in protein stabilization.

The protein resides in the endoplasmic reticulum membrane. The enzyme catalyses a sterol + a long-chain fatty acyl-CoA = a long-chain 3-hydroxysterol ester + CoA. It catalyses the reaction cholesterol + an acyl-CoA = a cholesterol ester + CoA. The catalysed reaction is cholesterol + (9Z)-octadecenoyl-CoA = cholesteryl (9Z-octadecenoate) + CoA. It carries out the reaction (5Z,8Z,11Z,14Z,17Z)-eicosapentaenoyl-CoA + cholesterol = (5Z,8Z,11Z,14Z,17Z-eicosapentaenoyl)-cholesterol + CoA. The enzyme catalyses (9Z,12Z,15Z)-octadecatrienoyl-CoA + cholesterol = (9Z,12Z,15Z-octadecatrienoyl)-cholesterol + CoA. It catalyses the reaction (5Z,8Z,11Z,14Z)-eicosatetraenoyl-CoA + cholesterol = cholesteryl (5Z,8Z,11Z,14Z)-eicosatetraenoate + CoA. Its function is as follows. Catalyzes the formation of fatty acid-cholesterol esters, which are less soluble in membranes than cholesterol. Plays a role in lipoprotein assembly and dietary cholesterol absorption. Utilizes oleoyl-CoA ((9Z)-octadecenoyl-CoA) and linolenoyl-CoA ((9Z,12Z,15Z)-octadecatrienoyl-CoA) as substrates. May provide cholesteryl esters for lipoprotein secretion from hepatocytes and intestinal mucosa. This is Sterol O-acyltransferase 2 from Rattus norvegicus (Rat).